The following is a 2449-amino-acid chain: Nonribisomal peptide synthetase phqB (2449 aa).

The segment at 253 to 654 is adenylation 1; the sequence is IQVHSGPGRL…GRRDTVVKIR (402 aa). One can recognise a Carrier 1 domain in the interval 795 to 870; sequence LPMTPNEDVL…LRTVAKEARP (76 aa). An O-(pantetheine 4'-phosphoryl)serine modification is found at Ser815. Residues 913-1337 are condensation 1; the sequence is QDIYPTTPLQ…LISDRDSELL (425 aa). The interval 1357–1756 is adenylation 2; sequence EAQVTRNPSK…TFTFLGRTNQ (400 aa). A Carrier 2 domain is found at 1915 to 1993; sequence WALSKHIGQL…MVAEMIDRTP (79 aa). Ser1952 carries the O-(pantetheine 4'-phosphoryl)serine modification. The reductase (R) domain stretch occupies residues 2041–2297; that stretch reads LTGATGFLGT…VAAVDWVASL (257 aa). NADPH contacts are provided by Thr2045, Met2249, and Asn2259.

This sequence belongs to the NRP synthetase family.

The protein operates within alkaloid biosynthesis. In terms of biological role, nonribisomal peptide synthetase; part of the gene cluster that mediates the biosynthesis of paraherquamide, a fungal indole alkaloid that belongs to a family of natural products containing a characteristic bicyclo[2.2.2]diazaoctane core. The first steps in the biosynthesis of paraherquamide is the production of the beta-methyl-proline precursor from L-isoleucine. They require oxidation of a terminally hydroxylated L-isoleucine to the corresponding aldehyde by enzymes which have still to be identified. Spontaneous cyclization and dehydration would yield the 4-methyl pyrolline-5-carboxylic acid, which is then reduced by the pyrroline-5-carboxylate reductase phqD leading to the beta-methyl-proline precursor. The next step of paraherquamide biosynthesis involves coupling of beta-methyl-proline and L-tryptophan by the bimodular NRPS phqB, to produce a monooxopiperazine intermediate. The reductase (R) domain of phqB utilizes NADPH for hydride transfer to reduce the thioester bond of the T domain-tethered linear dipeptide to a hemithioaminal intermediate, which spontaneously cleaves the C-S bond to release the aldehyde product. This compound undergoes spontaneous cyclization and dehydration to give a dienamine which is reverse prenylated at C-2 by the reverse prenyltransferase phqJ. The other prenyltransferase present in the cluster, phqI may be a redundant gene in the pathway. During biosynthetic assembly, the key step to produce the polycyclic core is catalyzed by the bifunctional reductase and intramolecular [4+2] Diels-Alderase, phqE, resulting in formation of the [2.2.2] diazaoctane intermediate preparaherquamide. Following formation of preparaherquamide, an indole 2,3-epoxidation-initiated pinacol-like rearrangement is catalyzed by the phqK FAD-dependent monooxygenase. The prenyltransferase phqA, the cytochrome P450 monooxygenase phqL, and the FAD-linked oxidoreductase phqH (or the cytochrome P450 monooxygenase phqM), are proposed to be involved in the formation of the pyran ring. The FAD-dependent monooxygenase phqK is likely responsible for generation of the spiro-oxindole, and the N-methylation is likely mediated by the phqN methyltransferase leading to the isolable natural product paraherquamide F. However, the order of these biosynthetic steps has still to be determined. In late-stage paraherquamide biosynthesis, the third P450 monooxygenase, phqO, is probably responsible for the C-14 hydroxylation, transforming paraherquamide F to paraherquamide G, and paraherquamide E to the final product paraherquamide A. The expansion from the 6-membered ring pyran (in paraherquamides F and G) to the 7-membered dioxepin ring (in paraherquamides A and E) represents a poorly understood but intriguing process that probably involves the 2-oxoglutarate-dependent dioxygenase phqC. Finally, the remaining members of the paraherquamide cluster, including phqI as well as phqM (or phqH), do not have a clearly prescribed role and appear to be redundant. The sequence is that of Nonribisomal peptide synthetase phqB from Penicillium fellutanum.